Reading from the N-terminus, the 1612-residue chain is DNA topoisomerase 2-beta (1612 aa).

Alanine 2 is modified (N-acetylalanine). Lysine 3 is modified (N6-acetyllysine). Glycyl lysine isopeptide (Lys-Gly) (interchain with G-Cter in SUMO2) cross-links involve residues lysine 21 and lysine 22. ATP-binding positions include asparagine 100, asparagine 129, and 157–159 (SSN). Residues lysine 165 and lysine 166 each participate in a glycyl lysine isopeptide (Lys-Gly) (interchain with G-Cter in SUMO2) cross-link. ATP is bound at residue 170–177 (GRNGYGAK). Glycyl lysine isopeptide (Lys-Gly) (interchain with G-Cter in SUMO2) cross-links involve residues lysine 216 and lysine 287. The segment at 351–353 (KKK) is interaction with DNA. Glycyl lysine isopeptide (Lys-Gly) (interchain with G-Cter in SUMO2) cross-links involve residues lysine 355 and lysine 361. 385-387 (QTK) is an ATP binding site. Residues lysine 425, lysine 427, and lysine 434 each participate in a glycyl lysine isopeptide (Lys-Gly) (interchain with G-Cter in SUMO2) cross-link. In terms of domain architecture, Toprim spans 464–581 (CTLILTEGDS…SLLKHGFLEE (118 aa)). Residues glutamate 470, aspartate 550, and aspartate 552 each coordinate Mg(2+). Glycyl lysine isopeptide (Lys-Gly) (interchain with G-Cter in SUMO2) cross-links involve residues lysine 588, lysine 593, lysine 623, lysine 631, lysine 634, lysine 664, and lysine 700. Positions 724 to 1177 (IPSLVDGFKP…SPSDLWKEDL (454 aa)) constitute a Topo IIA-type catalytic domain. Tyrosine 814 (O-(5'-phospho-DNA)-tyrosine intermediate) is an active-site residue. The segment at 999 to 1008 (KLQTTLTCNS) is interaction with DNA. A Glycyl lysine isopeptide (Lys-Gly) (interchain with G-Cter in SUMO2) cross-link involves residue lysine 1080. The disordered stretch occupies residues 1098-1128 (AWKEAQEKAAEEEDSQNQHDDSSSDSGTPSG). Glycyl lysine isopeptide (Lys-Gly) (interchain with G-Cter in SUMO2) cross-links involve residues lysine 1202, lysine 1205, lysine 1214, and lysine 1215. At serine 1224 the chain carries Phosphoserine. Glycyl lysine isopeptide (Lys-Gly) (interchain with G-Cter in SUMO2) cross-links involve residues lysine 1238, lysine 1250, and lysine 1259. The segment at 1245–1586 (LLKKKKGDPD…FTSEPPALPR (342 aa)) is disordered. A Phosphothreonine modification is found at threonine 1280. Glycyl lysine isopeptide (Lys-Gly) (interchain with G-Cter in SUMO2) cross-links involve residues lysine 1311 and lysine 1315. Composition is skewed to basic and acidic residues over residues 1322 to 1332 (PWSDDESKSES) and 1346 to 1358 (SLLR…RPKY). Phosphoserine occurs at positions 1324, 1328, 1330, 1332, and 1346. Tyrosine 1358 carries the post-translational modification Phosphotyrosine. Acidic residues predominate over residues 1362 to 1379 (FSEEEDDDAAAADDSNDL). Serine 1363 and serine 1376 each carry phosphoserine. A Glycyl lysine isopeptide (Lys-Gly) (interchain with G-Cter in SUMO2) cross-link involves residue lysine 1385. Serine 1387 carries the post-translational modification Phosphoserine. At threonine 1390 the chain carries Phosphothreonine. Serine 1400 bears the Phosphoserine mark. At tyrosine 1408 the chain carries Phosphotyrosine. At serine 1411 the chain carries Phosphoserine. Over residues 1417 to 1429 (ATPEKSSNDKKSQ) the composition is skewed to basic and acidic residues. Lysine 1427 is covalently cross-linked (Glycyl lysine isopeptide (Lys-Gly) (interchain with G-Cter in SUMO2)). Residues serine 1428, serine 1439, and serine 1441 each carry the phosphoserine modification. Residue lysine 1443 forms a Glycyl lysine isopeptide (Lys-Gly) (interchain with G-Cter in SUMO2) linkage. The span at 1443–1453 (KSEDDSAKFDS) shows a compositional bias: basic and acidic residues. A phosphoserine mark is found at serine 1448, serine 1453, and serine 1460. Residue lysine 1477 forms a Glycyl lysine isopeptide (Lys-Gly) (interchain with G-Cter in SUMO2) linkage. Residues 1493–1499 (KAKRAPK) are interaction with PLSCR1. A phosphoserine mark is found at serine 1509, serine 1511, and serine 1513. Basic residues predominate over residues 1526 to 1536 (GKGRGAKKRKA). Phosphoserine occurs at positions 1537 and 1539. Basic residues predominate over residues 1550–1561 (KPSKTASKKPKK). Residue threonine 1562 is modified to Phosphothreonine. 2 positions are modified to phosphoserine: serine 1563 and serine 1568. Phosphotyrosine is present on tyrosine 1596. The residue at position 1600 (serine 1600) is a Phosphoserine.

It belongs to the type II topoisomerase family. In terms of assembly, homodimer. Interacts with KIAA1210. Interacts with PLSCR1. The cofactor is Mg(2+). Requires Mn(2+) as cofactor. Ca(2+) serves as cofactor.

It localises to the nucleus. The protein resides in the nucleolus. Its subcellular location is the nucleoplasm. It catalyses the reaction ATP-dependent breakage, passage and rejoining of double-stranded DNA.. Key decatenating enzyme that alters DNA topology by binding to two double-stranded DNA molecules, generating a double-stranded break in one of the strands, passing the intact strand through the broken strand, and religating the broken strand. Plays a role in B-cell differentiation. In Mus musculus (Mouse), this protein is DNA topoisomerase 2-beta (Top2b).